The primary structure comprises 260 residues: Indole-3-glycerol phosphate synthase (260 aa).

It belongs to the TrpC family.

The catalysed reaction is 1-(2-carboxyphenylamino)-1-deoxy-D-ribulose 5-phosphate + H(+) = (1S,2R)-1-C-(indol-3-yl)glycerol 3-phosphate + CO2 + H2O. It participates in amino-acid biosynthesis; L-tryptophan biosynthesis; L-tryptophan from chorismate: step 4/5. The chain is Indole-3-glycerol phosphate synthase from Koribacter versatilis (strain Ellin345).